A 204-amino-acid chain; its full sequence is Large ribosomal subunit protein bL25 (204 aa).

This sequence belongs to the bacterial ribosomal protein bL25 family. CTC subfamily. Part of the 50S ribosomal subunit; part of the 5S rRNA/L5/L18/L25 subcomplex. Contacts the 5S rRNA. Binds to the 5S rRNA independently of L5 and L18.

Functionally, this is one of the proteins that binds to the 5S RNA in the ribosome where it forms part of the central protuberance. The chain is Large ribosomal subunit protein bL25 from Burkholderia mallei (strain NCTC 10247).